Reading from the N-terminus, the 328-residue chain is tRNA uridine(34) hydroxylase (328 aa).

Residues 130–224 form the Rhodanese domain; the sequence is LDEDTVVLDT…YGKDPEVQGE (95 aa). Residue cysteine 184 is the Cysteine persulfide intermediate of the active site.

It belongs to the TrhO family.

It carries out the reaction uridine(34) in tRNA + AH2 + O2 = 5-hydroxyuridine(34) in tRNA + A + H2O. Its function is as follows. Catalyzes oxygen-dependent 5-hydroxyuridine (ho5U) modification at position 34 in tRNAs. The polypeptide is tRNA uridine(34) hydroxylase (Streptococcus pyogenes serotype M6 (strain ATCC BAA-946 / MGAS10394)).